The following is a 388-amino-acid chain: Deoxyuridine 5'-triphosphate nucleotidohydrolase (388 aa).

Over residues 77–88 the composition is skewed to basic and acidic residues; it reads EEKYDKEQHPGE. 2 disordered regions span residues 77–96 and 336–388; these read EEKYDKEQHPGEDEASSPLP and THTP…PRHP. Acidic residues predominate over residues 351-363; the sequence is VDDDVDETEEDEK.

It belongs to the dUTPase family. Mg(2+) serves as cofactor.

The catalysed reaction is dUTP + H2O = dUMP + diphosphate + H(+). The protein operates within pyrimidine metabolism; dUMP biosynthesis; dUMP from dCTP (dUTP route): step 2/2. Functionally, involved in nucleotide metabolism: produces dUMP, the immediate precursor of thymidine nucleotides and decreases the intracellular concentration of dUTP to avoid uracil incorporation into viral DNA. The chain is Deoxyuridine 5'-triphosphate nucleotidohydrolase from Homo sapiens (Human).